The chain runs to 284 residues: 3-methyl-2-oxobutanoate hydroxymethyltransferase (284 aa).

Mg(2+)-binding residues include D52 and D91. 3-methyl-2-oxobutanoate is bound by residues 52–53 (DS), D91, and K121. E123 lines the Mg(2+) pocket. E191 acts as the Proton acceptor in catalysis.

This sequence belongs to the PanB family. In terms of assembly, homodecamer; pentamer of dimers. Mg(2+) serves as cofactor.

It localises to the cytoplasm. The enzyme catalyses 3-methyl-2-oxobutanoate + (6R)-5,10-methylene-5,6,7,8-tetrahydrofolate + H2O = 2-dehydropantoate + (6S)-5,6,7,8-tetrahydrofolate. It functions in the pathway cofactor biosynthesis; (R)-pantothenate biosynthesis; (R)-pantoate from 3-methyl-2-oxobutanoate: step 1/2. In terms of biological role, catalyzes the reversible reaction in which hydroxymethyl group from 5,10-methylenetetrahydrofolate is transferred onto alpha-ketoisovalerate to form ketopantoate. This Deinococcus radiodurans (strain ATCC 13939 / DSM 20539 / JCM 16871 / CCUG 27074 / LMG 4051 / NBRC 15346 / NCIMB 9279 / VKM B-1422 / R1) protein is 3-methyl-2-oxobutanoate hydroxymethyltransferase.